A 518-amino-acid polypeptide reads, in one-letter code: Membrane-bound lytic murein transglycosylase F (518 aa).

The N-terminal stretch at 1 to 21 (MKKLKINYLFIGILALLLAVA) is a signal peptide. The non-LT domain stretch occupies residues 22 to 269 (LWPSIPWFGK…RIEEKYLGHG (248 aa)). Positions 270–518 (DDFDYVDTRT…SRKGSEEKQN (249 aa)) are LT domain. Residue Glu-314 is part of the active site.

It in the N-terminal section; belongs to the bacterial solute-binding protein 3 family. The protein in the C-terminal section; belongs to the transglycosylase Slt family.

It is found in the cell outer membrane. The catalysed reaction is Exolytic cleavage of the (1-&gt;4)-beta-glycosidic linkage between N-acetylmuramic acid (MurNAc) and N-acetylglucosamine (GlcNAc) residues in peptidoglycan, from either the reducing or the non-reducing ends of the peptidoglycan chains, with concomitant formation of a 1,6-anhydrobond in the MurNAc residue.. Murein-degrading enzyme that degrades murein glycan strands and insoluble, high-molecular weight murein sacculi, with the concomitant formation of a 1,6-anhydromuramoyl product. Lytic transglycosylases (LTs) play an integral role in the metabolism of the peptidoglycan (PG) sacculus. Their lytic action creates space within the PG sacculus to allow for its expansion as well as for the insertion of various structures such as secretion systems and flagella. The chain is Membrane-bound lytic murein transglycosylase F from Escherichia coli (strain ATCC 8739 / DSM 1576 / NBRC 3972 / NCIMB 8545 / WDCM 00012 / Crooks).